Reading from the N-terminus, the 328-residue chain is D-cysteine desulfhydrase (328 aa).

K51 bears the N6-(pyridoxal phosphate)lysine mark.

It belongs to the ACC deaminase/D-cysteine desulfhydrase family. As to quaternary structure, homodimer. Pyridoxal 5'-phosphate is required as a cofactor.

The enzyme catalyses D-cysteine + H2O = hydrogen sulfide + pyruvate + NH4(+) + H(+). In terms of biological role, catalyzes the alpha,beta-elimination reaction of D-cysteine and of several D-cysteine derivatives. It could be a defense mechanism against D-cysteine. The polypeptide is D-cysteine desulfhydrase (Salmonella typhi).